Reading from the N-terminus, the 1251-residue chain is Centrosomal protein of 162 kDa (1251 aa).

Composition is skewed to basic and acidic residues over residues 1 to 19 and 144 to 159; these read MLEK…KEEG and ESEK…KCES. Disordered stretches follow at residues 1 to 33, 144 to 183, and 442 to 473; these read MLEK…KEIL, ESEK…QEPN, and LHKK…SIPA. The span at 160–169 shows a compositional bias: acidic residues; that stretch reads YSEDFEEDTD. Over residues 457–470 the composition is skewed to low complexity; it reads SSGYGKSTSYSKQS. Coiled coils occupy residues 559 to 782, 813 to 1165, and 1210 to 1242; these read EREL…VQIT, YAEN…SQAT, and KVAE…QEAL. Positions 1078–1100 are disordered; sequence SDNNLRNKTDNKENRQESLKNNT. The segment covering 1082–1095 has biased composition (basic and acidic residues); the sequence is LRNKTDNKENRQES.

Belongs to the CEP162 family. Expressed in retina and brain (at protein level).

It localises to the cytoplasm. It is found in the cytoskeleton. Its subcellular location is the microtubule organizing center. The protein localises to the centrosome. The protein resides in the centriole. It localises to the nucleus. Required to promote assembly of the transition zone in primary cilia. Acts by specifically recognizing and binding the axonemal microtubule. Plays a role in cell proliferation and differentiation in the neuroretina. Has an ATPase activity in vitro. This is Centrosomal protein of 162 kDa (CEP162) from Coturnix coturnix (Common quail).